A 309-amino-acid chain; its full sequence is Tagatose-6-phosphate kinase (309 aa).

The protein belongs to the carbohydrate kinase PfkB family. LacC subfamily.

It catalyses the reaction D-tagatofuranose 6-phosphate + ATP = D-tagatofuranose 1,6-bisphosphate + ADP + H(+). It functions in the pathway carbohydrate metabolism; D-tagatose 6-phosphate degradation; D-glyceraldehyde 3-phosphate and glycerone phosphate from D-tagatose 6-phosphate: step 1/2. The polypeptide is Tagatose-6-phosphate kinase (Streptococcus pneumoniae serotype 4 (strain ATCC BAA-334 / TIGR4)).